A 1709-amino-acid chain; its full sequence is Acrosomal protein KIAA1210 (1709 aa).

Disordered regions lie at residues 207–226, 239–275, 451–663, 763–973, 1211–1382, 1408–1516, 1539–1571, and 1589–1653; these read PVRENQPTKARAKSSMGSKA, PERSASKMFPSMDPQRGRPQQRSHISRTLPKPRSKVP, PNLD…AEKT, PPRS…MAVE, LKRG…SVNA, TKKF…GRGH, ADKQQSRPKSESMAKKQPACKTPGKPAGQQSDY, and FKAH…KSVG. Positions 257–272 are enriched in basic residues; it reads PQQRSHISRTLPKPRS. The span at 473 to 490 shows a compositional bias: basic and acidic residues; that stretch reads EEEKSITKPKEINEKKLG. Polar residues-rich tracts occupy residues 494–505 and 514–527; these read ADSSSQKQNNKT and DQAPNTDASRSQGY. Residues 595–608 are compositionally biased toward low complexity; that stretch reads EQPTTSQPETTTPQ. Residues 651–663 are compositionally biased toward basic and acidic residues; it reads PYHEDAASGAEKT. Positions 777 to 794 are enriched in acidic residues; that stretch reads EEVSSDSENIPEEGDGSE. 5 stretches are compositionally biased toward polar residues: residues 886-941, 1288-1299, 1332-1350, 1366-1376, and 1457-1469; these read KNQQ…QSDS, FKEQLSPRQLSQ, HSSQASDRSKFQPQMSSKG, PSSSPFQQQVH, and DGNNNQHANLSNQ. Residues 1502 to 1513 show a composition bias toward low complexity; sequence SVPSGPISSSVG. Basic and acidic residues predominate over residues 1542–1552; it reads QQSRPKSESMA.

In terms of assembly, interacts with TOP2B.

It is found in the cytoplasmic vesicle. It localises to the secretory vesicle. The protein resides in the acrosome. In Homo sapiens (Human), this protein is Acrosomal protein KIAA1210.